Consider the following 403-residue polypeptide: Serine/threonine transporter SstT (403 aa).

The next 9 membrane-spanning stretches (helical) occupy residues 14–34 (VTQI…APAI), 44–64 (VFVS…VMAS), 79–99 (ILWL…VASM), 138–158 (ALLN…GVAL), 175–195 (GVTL…FGLV), 214–234 (LAVL…LIVF), 295–315 (MAGA…TLGI), 327–347 (VVAA…LLLI), and 353–373 (LFGI…IIGV).

The protein belongs to the dicarboxylate/amino acid:cation symporter (DAACS) (TC 2.A.23) family.

It localises to the cell inner membrane. It catalyses the reaction L-serine(in) + Na(+)(in) = L-serine(out) + Na(+)(out). The catalysed reaction is L-threonine(in) + Na(+)(in) = L-threonine(out) + Na(+)(out). Involved in the import of serine and threonine into the cell, with the concomitant import of sodium (symport system). This chain is Serine/threonine transporter SstT, found in Pseudomonas putida (strain ATCC 700007 / DSM 6899 / JCM 31910 / BCRC 17059 / LMG 24140 / F1).